A 571-amino-acid chain; its full sequence is Membrane protein insertase YidC (571 aa).

A helical membrane pass occupies residues 4–24 (TRVFLIFAWLMVAVLLWMEWS). The disordered stretch occupies residues 29 to 76 (APTPAPTTTSAPAAAQSVPGATPGSVPNAQVPGAPGQAAVQAQASATP). 2 stretches are compositionally biased toward low complexity: residues 34–43 (PTTTSAPAAA) and 57–76 (AQVP…SATP). A run of 4 helical transmembrane segments spans residues 369 to 389 (LVGN…LVLY), 440 to 460 (GGCL…WVLV), 483 to 503 (YFIL…LTPA), and 518 to 538 (PLVF…YWVV).

Belongs to the OXA1/ALB3/YidC family. Type 1 subfamily. As to quaternary structure, interacts with the Sec translocase complex via SecD. Specifically interacts with transmembrane segments of nascent integral membrane proteins during membrane integration.

The protein resides in the cell inner membrane. Its function is as follows. Required for the insertion and/or proper folding and/or complex formation of integral membrane proteins into the membrane. Involved in integration of membrane proteins that insert both dependently and independently of the Sec translocase complex, as well as at least some lipoproteins. Aids folding of multispanning membrane proteins. In Stenotrophomonas maltophilia (strain R551-3), this protein is Membrane protein insertase YidC.